A 200-amino-acid polypeptide reads, in one-letter code: Protein GrpE (200 aa).

The span at 1 to 11 (MSNQTNKAQDN) shows a compositional bias: polar residues. The tract at residues 1-29 (MSNQTNKAQDNQVEEIVEGELLNENGTEA) is disordered.

The protein belongs to the GrpE family. In terms of assembly, homodimer.

It localises to the cytoplasm. Its function is as follows. Participates actively in the response to hyperosmotic and heat shock by preventing the aggregation of stress-denatured proteins, in association with DnaK and GrpE. It is the nucleotide exchange factor for DnaK and may function as a thermosensor. Unfolded proteins bind initially to DnaJ; upon interaction with the DnaJ-bound protein, DnaK hydrolyzes its bound ATP, resulting in the formation of a stable complex. GrpE releases ADP from DnaK; ATP binding to DnaK triggers the release of the substrate protein, thus completing the reaction cycle. Several rounds of ATP-dependent interactions between DnaJ, DnaK and GrpE are required for fully efficient folding. The polypeptide is Protein GrpE (Shewanella halifaxensis (strain HAW-EB4)).